Reading from the N-terminus, the 479-residue chain is ATP synthase subunit beta (479 aa).

160 to 167 (GGAGVGKT) provides a ligand contact to ATP.

It belongs to the ATPase alpha/beta chains family. F-type ATPases have 2 components, CF(1) - the catalytic core - and CF(0) - the membrane proton channel. CF(1) has five subunits: alpha(3), beta(3), gamma(1), delta(1), epsilon(1). CF(0) has three main subunits: a(1), b(2) and c(9-12). The alpha and beta chains form an alternating ring which encloses part of the gamma chain. CF(1) is attached to CF(0) by a central stalk formed by the gamma and epsilon chains, while a peripheral stalk is formed by the delta and b chains.

The protein resides in the cell inner membrane. The enzyme catalyses ATP + H2O + 4 H(+)(in) = ADP + phosphate + 5 H(+)(out). Its function is as follows. Produces ATP from ADP in the presence of a proton gradient across the membrane. The catalytic sites are hosted primarily by the beta subunits. The polypeptide is ATP synthase subunit beta (Anaplasma phagocytophilum (strain HZ)).